The chain runs to 207 residues: Chloramphenicol acetyltransferase (207 aa).

His186 functions as the Proton acceptor in the catalytic mechanism.

Belongs to the chloramphenicol acetyltransferase family. Homotrimer.

It catalyses the reaction chloramphenicol + acetyl-CoA = chloramphenicol 3-acetate + CoA. This enzyme is an effector of chloramphenicol resistance in bacteria. This Campylobacter coli protein is Chloramphenicol acetyltransferase.